An 89-amino-acid chain; its full sequence is Small ribosomal subunit protein uS15 (89 aa).

The span at 1-18 (MALSAQEKDAIVKEHQTS) shows a compositional bias: basic and acidic residues. The segment at 1-25 (MALSAQEKDAIVKEHQTSETDTGSP) is disordered.

It belongs to the universal ribosomal protein uS15 family. Part of the 30S ribosomal subunit. Forms a bridge to the 50S subunit in the 70S ribosome, contacting the 23S rRNA.

Its function is as follows. One of the primary rRNA binding proteins, it binds directly to 16S rRNA where it helps nucleate assembly of the platform of the 30S subunit by binding and bridging several RNA helices of the 16S rRNA. Functionally, forms an intersubunit bridge (bridge B4) with the 23S rRNA of the 50S subunit in the ribosome. This chain is Small ribosomal subunit protein uS15, found in Teredinibacter turnerae (strain ATCC 39867 / T7901).